Reading from the N-terminus, the 326-residue chain is RNA-binding motif protein, X-linked 2 (326 aa).

Lysine 8 participates in a covalent cross-link: Glycyl lysine isopeptide (Lys-Gly) (interchain with G-Cter in SUMO2). The region spanning 36–114 (AWIFVGGLPY…RTIRVDHVSN (79 aa)) is the RRM domain. Positions 117–326 (APQESEDVDD…SYHGSDRRHH (210 aa)) are disordered. A Phosphothreonine modification is found at threonine 140. Serine 149 carries the phosphoserine modification. Over residues 157 to 172 (TKKHKKDKKEKKKRKK) the composition is skewed to basic residues. Polar residues predominate over residues 177–190 (GQAQAEQPSCSRSA). Composition is skewed to basic and acidic residues over residues 191 to 200 (TVKEKKDERA), 207 to 219 (KTSE…EHRE), 236 to 245 (ARAEDPECKA), and 255 to 273 (KSAS…ERGR). Serine 274 bears the Phosphoserine mark. Residues 291–312 (HRSRSRSRSPDKSHRHKKYRHS) show a composition bias toward basic residues. Over residues 313–326 (RERDSYHGSDRRHH) the composition is skewed to basic and acidic residues.

It belongs to the IST3 family. In terms of assembly, part of the activated spliceosome B/catalytic step 1 spliceosome, one of the forms of the spliceosome which has a well-formed active site but still cannot catalyze the branching reaction and is composed of at least 52 proteins, the U2, U5 and U6 snRNAs and the pre-mRNA. Component of the minor spliceosome, which splices U12-type introns.

The protein resides in the nucleus. Functionally, involved in pre-mRNA splicing as component of the activated spliceosome. As a component of the minor spliceosome, involved in the splicing of U12-type introns in pre-mRNAs. This is RNA-binding motif protein, X-linked 2 (Rbmx2) from Mus musculus (Mouse).